Here is a 1213-residue protein sequence, read N- to C-terminus: MDLLGDQHFAAQQPPLFDATPSSLKEDAEELIAETIAAWDSIVSQIQTENATFQNTISPIIQDENVKSQKQRVLTFYSSTSPSKDLRDASTAVGRLFNDAEIELYSRQDMFERVDQVLQQQDKQVVASLDEESLYYIQKLHRRFHQNGCGIAEEGQRVTFKTKMKRLGHLVQQCNKNLNEDKSGVWLGLDELDGIPQSLISRLKQGDGENSDHLWLPTKVPFSSPAITNAKSEATRKRIYCAIQNRMEMNVPLFREIVLLRDETARLLGYADHATLKTADKMMQTPQAVEALLSEIRTAVAPLAAQDVEELLEIKRNEAESRGTTADELYFWDLAYYSARRGEAEKKISSSISEYFELNTTLAKLLSIIEHLFGTRFRRVNAAGRDEAAGSLIWHKDVQMYSVWNVDGPKEFLGLFLASSALVMNYVRPTDTRPTLLSLDEVRKLFHEIGHLLHSQWTQTKYAALHHVDRDFVEAPSMMLEQFFWVEQHIKDVSFHYSHIDSKMKDMWKATLVDQDDTNPPEKPAQLSDDVVFNLARANQSKAIQGQLKEVFFATYDMLVHKPASRAALEALNLTELFNKTRSDVYKVRGGEALGGGWEWGHGQTVFRNILNRYDAGYYSYLLGRVFAMDIFDTGFKEKTPSREAGRRYRDMVYRVGGRQAEMKTMTDYLGHEPSTHPYLAWLQVFACVVPRDMVPNTAQIGSITTETIVGLLSPVRMAVWGLLPIKWRMTRELSACKQRCLQEDGHLVALEVRLVHSRHTLAAAVGEQRVAAPGSTAYDAALRSYFSVQQAAMQPACVVLPQSDEDVSAAVRCLAQLHQGGGESCRFAVRSGGHTSWAGASNIQHGAVIDLGRSAPSSSRRTSRRSRSGWGPRGAMWVGGLTLGGGLSYTSPRYGWTCDAVSQFQIVLADGSVVAADSKERPSLFRALKGGSNNFGIVTRITFETFRQGPVWSGTVYSLSSTAEAAIDNFVAFNSATSYDEYASVMTSFVYNQARGLPVVANLLQYTKEVTGTPAAFEGFMAVPNIYSSTSVASTLATTQATAALNSGGVRSLTYAVTLVSTKEVIQAAYEKWSTSYPAIKDVRNIIFSLVLEPLPPAIYQRHATTNTLGLADRAGALVVAELSVSWADAGDDALVSSTARALVDDIVAAAKSLGGFDPYIFANYANKDQAQDVIRSYGAESVSFLMQVRHEVDPKGIFTHLVPGGYKIPEH.

His-447 contacts Zn(2+). Glu-448 is a catalytic residue. Residues His-451 and His-454 each coordinate Zn(2+).

It belongs to the peptidase M3 family. Monomer. Zn(2+) serves as cofactor.

The protein operates within mycotoxin biosynthesis. Functionally, oligopeptidase; part of the gene cluster that mediates the biosynthesis of the phomopsins, a group of hexapeptide mycotoxins which infects lupins and causes lupinosis disease in livestock. Within the pathway, phomG and phomG' are probably involved in the processing of the phomA and phomA' precursors. The pathway starts with the processing of the precursor phomA by several endopeptidases including kexin proteases as well as the cluster-specific S41 family peptidase phomP1 and the oligopeptidase phomG to produce 10 identical copies of the hexapeptide Tyr-Val-Ile-Pro-Ile-Asp. After being excised from the precursor peptide, the core peptides are cyclized and modified post-translationally by enzymes encoded within the gene cluster. The timing and order of proteolysis of the phomA precursor and PTMs are still unknown. Two tyrosinase-like enzymes, phomQ1 and phomQ2, catalyze the chlorination and hydroxylation of Tyr, respectively. PhomYb, is proposed to be involved in the construction of the macrocyclic structure. The other 4 ustYa family proteins may be involved in PTMs that generate the unique structure of phomopsin A. PhomYa is required for the hydroxylation of C-beta of Tyr. PhomYc, phomYd, and phomYe are responsible for the biosynthesis of 2,3-dehydroisoleucine (dIle), 2,3-dehydroaspartic acid (dAsp), and 3,4-dehydroproline (dPro), respectively. While dIle formation by phomYc is indispensable for the installation of dAsp by phomYd, the order of the other PTMs have not been elucidated yet. Most of the biosynthetic enzymes likely have broad substrate specificity, and thus, there might be a metabolic grid from a precursor to phomopsin A. The enzyme(s) responsible for the biosynthesis of 3,4-dehydrovaline (dVal) have also not been identified yet. Finally, phomM acts as an S-adenosylmethionine-dependent alpha-N-methyltransferase that catalyzes two successive N-methylation reactions, converting N-desmethyl-phomopsin A to phomopsin A and phomopsin A further to an N,N-dimethylated congener called phomopsin E. The chain is Oligopeptidase PhomG' from Diaporthe leptostromiformis (Lupinosis disease fungus).